The primary structure comprises 234 residues: Phosphoribosylformylglycinamidine synthase subunit PurQ (234 aa).

One can recognise a Glutamine amidotransferase type-1 domain in the interval 3–231 (AAVVVFPGSN…ALYLERRKDH (229 aa)). Cysteine 87 functions as the Nucleophile in the catalytic mechanism. Active-site residues include histidine 200 and glutamate 202.

Part of the FGAM synthase complex composed of 1 PurL, 1 PurQ and 2 PurS subunits.

It is found in the cytoplasm. The enzyme catalyses N(2)-formyl-N(1)-(5-phospho-beta-D-ribosyl)glycinamide + L-glutamine + ATP + H2O = 2-formamido-N(1)-(5-O-phospho-beta-D-ribosyl)acetamidine + L-glutamate + ADP + phosphate + H(+). It carries out the reaction L-glutamine + H2O = L-glutamate + NH4(+). Its pathway is purine metabolism; IMP biosynthesis via de novo pathway; 5-amino-1-(5-phospho-D-ribosyl)imidazole from N(2)-formyl-N(1)-(5-phospho-D-ribosyl)glycinamide: step 1/2. Part of the phosphoribosylformylglycinamidine synthase complex involved in the purines biosynthetic pathway. Catalyzes the ATP-dependent conversion of formylglycinamide ribonucleotide (FGAR) and glutamine to yield formylglycinamidine ribonucleotide (FGAM) and glutamate. The FGAM synthase complex is composed of three subunits. PurQ produces an ammonia molecule by converting glutamine to glutamate. PurL transfers the ammonia molecule to FGAR to form FGAM in an ATP-dependent manner. PurS interacts with PurQ and PurL and is thought to assist in the transfer of the ammonia molecule from PurQ to PurL. The protein is Phosphoribosylformylglycinamidine synthase subunit PurQ of Pseudothermotoga lettingae (strain ATCC BAA-301 / DSM 14385 / NBRC 107922 / TMO) (Thermotoga lettingae).